The sequence spans 92 residues: Small ribosomal subunit protein bS20 (92 aa).

The tract at residues 1–23 (MANTPSAKKRAKQAEKRRSHNAS) is disordered. Residues 7–20 (AKKRAKQAEKRRSH) show a composition bias toward basic residues.

This sequence belongs to the bacterial ribosomal protein bS20 family.

Functionally, binds directly to 16S ribosomal RNA. The protein is Small ribosomal subunit protein bS20 of Pseudomonas savastanoi pv. phaseolicola (strain 1448A / Race 6) (Pseudomonas syringae pv. phaseolicola (strain 1448A / Race 6)).